Here is a 357-residue protein sequence, read N- to C-terminus: Peptide chain release factor 1 (357 aa).

An N5-methylglutamine modification is found at Gln234.

Belongs to the prokaryotic/mitochondrial release factor family. Methylated by PrmC. Methylation increases the termination efficiency of RF1.

It is found in the cytoplasm. In terms of biological role, peptide chain release factor 1 directs the termination of translation in response to the peptide chain termination codons UAG and UAA. The polypeptide is Peptide chain release factor 1 (Lactococcus lactis subsp. cremoris (strain SK11)).